The sequence spans 1060 residues: Desmoglein-1-beta (1060 aa).

Residues 1–23 (MDWHSFRIAALLLTSLVVLEVNS) form the signal peptide. Residues 24 to 49 (EFQIQVRDHNAKNGTIKWHSIRRQKR) constitute a propeptide that is removed on maturation. 4 consecutive Cadherin domains span residues 50–157 (EWIK…PPVF), 158–269 (SMTT…IPYL), 270–389 (EQSS…RPGS), and 386–493 (RPGS…PGSD). Over 50–567 (EWIKFAAACR…ITEDNVHFGP (518 aa)) the chain is Extracellular. The N-linked (GlcNAc...) (high mannose) asparagine glycan is linked to Asn110. Asn180 is a glycosylation site (N-linked (GlcNAc...) asparagine). The interval 490 to 560 (PGSDGGGSSS…PEPEPFDITE (71 aa)) is disordered. A compositionally biased stretch (gly residues) spans 492–503 (SDGGGSSSGSGG). Positions 510 to 519 (NGYQGTSTVG) are enriched in polar residues. The segment covering 525–537 (GSGGVTSSGGGSG) has biased composition (gly residues). Residues 549–560 (DEPEPEPFDITE) are compositionally biased toward acidic residues. Residues 568–588 (AGIGLLIMGFLVLGLVPFLLI) traverse the membrane as a helical segment. Topologically, residues 589-1060 (CCDCGGAPGG…TKYSTVQYSK (472 aa)) are cytoplasmic. The span at 792 to 801 (PDPDSSWPPQ) shows a compositional bias: low complexity. Residues 792-811 (PDPDSSWPPQSTEPMCPQST) form a disordered region. Desmoglein repeat repeat units lie at residues 835-861 (AYPSGPGVQHPLPIPDPLGYGNVTVRE), 862-891 (SYATSGTLKPSVHFHDNQQASNVVVTERVV), 892-921 (GPVPGADLHGMLEIPDLRDGTNVIVTERVI), 922-949 (APGSSLPTSLTIPNPRETSNVVVTERVI), and 950-978 (QPTSGMIGNLSMTPELSSAQNVIVTERVV).

Interacts with DSC3; there is evidence to suggest that the interaction promotes cell-cell adhesion of keratinocytes. Expressed in epidermis.

The protein localises to the cell membrane. The protein resides in the cell junction. Its subcellular location is the desmosome. It localises to the cytoplasm. It is found in the nucleus. Functionally, component of intercellular desmosome junctions. Involved in the interaction of plaque proteins and intermediate filaments mediating cell-cell adhesion. In Mus musculus (Mouse), this protein is Desmoglein-1-beta (Dsg1b).